Here is a 229-residue protein sequence, read N- to C-terminus: Urease accessory protein UreF (229 aa).

It belongs to the UreF family. UreD, UreF and UreG form a complex that acts as a GTP-hydrolysis-dependent molecular chaperone, activating the urease apoprotein by helping to assemble the nickel containing metallocenter of UreC. The UreE protein probably delivers the nickel.

It is found in the cytoplasm. Its function is as follows. Required for maturation of urease via the functional incorporation of the urease nickel metallocenter. The sequence is that of Urease accessory protein UreF from Staphylococcus aureus (strain MRSA252).